The primary structure comprises 88 residues: Small ribosomal subunit protein uS15 (88 aa).

Belongs to the universal ribosomal protein uS15 family. Part of the 30S ribosomal subunit. Forms a bridge to the 50S subunit in the 70S ribosome, contacting the 23S rRNA.

Functionally, one of the primary rRNA binding proteins, it binds directly to 16S rRNA where it helps nucleate assembly of the platform of the 30S subunit by binding and bridging several RNA helices of the 16S rRNA. Its function is as follows. Forms an intersubunit bridge (bridge B4) with the 23S rRNA of the 50S subunit in the ribosome. This is Small ribosomal subunit protein uS15 from Mycoplasmopsis synoviae (strain 53) (Mycoplasma synoviae).